Consider the following 322-residue polypeptide: Ferredoxin--NADP reductase (322 aa).

Residues Ser-14, Asp-33, Gln-41, Tyr-46, Ala-86, Phe-120, Asp-278, and Ser-319 each coordinate FAD.

The protein belongs to the ferredoxin--NADP reductase type 2 family. Homodimer. The cofactor is FAD.

The catalysed reaction is 2 reduced [2Fe-2S]-[ferredoxin] + NADP(+) + H(+) = 2 oxidized [2Fe-2S]-[ferredoxin] + NADPH. The protein is Ferredoxin--NADP reductase of Salinispora arenicola (strain CNS-205).